A 328-amino-acid chain; its full sequence is NADH-quinone oxidoreductase subunit H 2 (328 aa).

Transmembrane regions (helical) follow at residues 3–23 (LIVA…ILLL), 77–97 (FLFK…FAAI), 119–139 (VALL…IFGG), 165–185 (MGFA…LDIV), 191–211 (VWNV…GLAE), 250–270 (MVLV…GVLI), 272–292 (LPPL…FMWF), and 307–327 (IGWK…GVVF).

This sequence belongs to the complex I subunit 1 family. NDH-1 is composed of 14 different subunits. Subunits NuoA, H, J, K, L, M, N constitute the membrane sector of the complex.

The protein resides in the cell inner membrane. The enzyme catalyses a quinone + NADH + 5 H(+)(in) = a quinol + NAD(+) + 4 H(+)(out). Functionally, NDH-1 shuttles electrons from NADH, via FMN and iron-sulfur (Fe-S) centers, to quinones in the respiratory chain. The immediate electron acceptor for the enzyme in this species is believed to be ubiquinone. Couples the redox reaction to proton translocation (for every two electrons transferred, four hydrogen ions are translocated across the cytoplasmic membrane), and thus conserves the redox energy in a proton gradient. This subunit may bind ubiquinone. The sequence is that of NADH-quinone oxidoreductase subunit H 2 from Rhizobium meliloti (strain 1021) (Ensifer meliloti).